The primary structure comprises 424 residues: Probable carboxypeptidase AN5749 (424 aa).

The N-terminal stretch at 1-17 is a signal peptide; it reads MNLSILAALALVSFSTA. N58 carries an N-linked (GlcNAc...) asparagine glycan. D139 contacts Zn(2+). The active-site Proton acceptor is the E171. E172 contacts Zn(2+). 2 N-linked (GlcNAc...) asparagine glycosylation sites follow: N184 and N323.

Belongs to the peptidase M20A family. It depends on Zn(2+) as a cofactor.

The protein localises to the secreted. The polypeptide is Probable carboxypeptidase AN5749 (Emericella nidulans (strain FGSC A4 / ATCC 38163 / CBS 112.46 / NRRL 194 / M139) (Aspergillus nidulans)).